Reading from the N-terminus, the 477-residue chain is Ribulose bisphosphate carboxylase large chain (477 aa).

A propeptide spanning residues 1–2 (MS) is cleaved from the precursor. Pro3 is subject to N-acetylproline. Lys14 carries the post-translational modification N6,N6,N6-trimethyllysine. Residues Asn123 and Thr173 each coordinate substrate. Lys175 serves as the catalytic Proton acceptor. Substrate is bound at residue Lys177. Mg(2+)-binding residues include Lys201, Asp203, and Glu204. Lys201 carries the post-translational modification N6-carboxylysine. His294 functions as the Proton acceptor in the catalytic mechanism. Substrate is bound by residues Arg295, His327, and Ser379.

It belongs to the RuBisCO large chain family. Type I subfamily. In terms of assembly, heterohexadecamer of 8 large chains and 8 small chains; disulfide-linked. The disulfide link is formed within the large subunit homodimers. Mg(2+) is required as a cofactor. Post-translationally, the disulfide bond which can form in the large chain dimeric partners within the hexadecamer appears to be associated with oxidative stress and protein turnover.

It localises to the plastid. The protein localises to the chloroplast. The enzyme catalyses 2 (2R)-3-phosphoglycerate + 2 H(+) = D-ribulose 1,5-bisphosphate + CO2 + H2O. It carries out the reaction D-ribulose 1,5-bisphosphate + O2 = 2-phosphoglycolate + (2R)-3-phosphoglycerate + 2 H(+). RuBisCO catalyzes two reactions: the carboxylation of D-ribulose 1,5-bisphosphate, the primary event in carbon dioxide fixation, as well as the oxidative fragmentation of the pentose substrate in the photorespiration process. Both reactions occur simultaneously and in competition at the same active site. This is Ribulose bisphosphate carboxylase large chain (rbcL) from Solanum tuberosum (Potato).